The following is a 108-amino-acid chain: Replication initiation control protein YabA (108 aa).

Residues His-83, Cys-85, Cys-99, and Cys-102 each coordinate Zn(2+).

Belongs to the YabA family. Homotetramer. Interacts with both DnaA and DnaN, acting as a bridge between these two proteins. Zn(2+) is required as a cofactor.

It localises to the cytoplasm. Its subcellular location is the nucleoid. Its function is as follows. Involved in control of chromosome replication initiation. Inhibits the cooperative binding of DnaA to the oriC region, thus negatively regulating initiation of chromosome replication. Inhibits the ability of DnaA-ATP to form a helix on DNA; does not disassemble preformed DnaA-DNA helices. Decreases the residence time of DnaA on the chromosome at its binding sites (oriC, replication forks and promoter-binding sites). Tethers DnaA to the replication machinery via the DNA polymerase beta sliding clamp subunit (dnaN). Associates with oriC and other DnaA targets on the chromosome in a DnaA-dependent manner. This is Replication initiation control protein YabA from Lactococcus lactis subsp. lactis (strain IL1403) (Streptococcus lactis).